The following is a 340-amino-acid chain: Glyceraldehyde-3-phosphate dehydrogenase (340 aa).

NAD(+) contacts are provided by residues 11–12 and Gly109; that span reads TI. Residue 138-140 participates in D-glyceraldehyde 3-phosphate binding; it reads SCN. Catalysis depends on Cys139, which acts as the Nucleophile. Arg167 lines the NAD(+) pocket. A D-glyceraldehyde 3-phosphate-binding site is contributed by 193-194; that stretch reads HA. Gln300 provides a ligand contact to NAD(+).

The protein belongs to the glyceraldehyde-3-phosphate dehydrogenase family. Homotetramer.

Its subcellular location is the cytoplasm. The catalysed reaction is D-glyceraldehyde 3-phosphate + phosphate + NADP(+) = (2R)-3-phospho-glyceroyl phosphate + NADPH + H(+). It carries out the reaction D-glyceraldehyde 3-phosphate + phosphate + NAD(+) = (2R)-3-phospho-glyceroyl phosphate + NADH + H(+). It functions in the pathway carbohydrate degradation; glycolysis; pyruvate from D-glyceraldehyde 3-phosphate: step 1/5. The polypeptide is Glyceraldehyde-3-phosphate dehydrogenase (Metallosphaera sedula (strain ATCC 51363 / DSM 5348 / JCM 9185 / NBRC 15509 / TH2)).